The following is a 193-amino-acid chain: Interferon type A1/A2 (193 aa).

An N-terminal signal peptide occupies residues 1–31; that stretch reads MAVPASPQHPRGYGILLLTLLLKALATTASA. 3 cysteine pairs are disulfide-bonded: C32–C129, C61–C155, and C68–C168. N-linked (GlcNAc...) asparagine glycosylation is found at N65, N71, N108, and N186.

The protein belongs to the alpha/beta interferon family.

Its subcellular location is the secreted. Its function is as follows. Has antiviral activities. The chain is Interferon type A1/A2 (IFNA1) from Gallus gallus (Chicken).